A 577-amino-acid polypeptide reads, in one-letter code: Zinc finger protein 384 (577 aa).

The segment at Thr171–Gly225 is disordered. Over residues Glu175–Ser185 the composition is skewed to gly residues. Position 214 is a phosphoserine (Ser214). 8 C2H2-type zinc fingers span residues Tyr228–His250, His256–His278, Tyr284–His306, His317–His339, Tyr345–His367, Tyr373–His397, Phe403–His425, and Tyr433–His455. A compositionally biased stretch (low complexity) spans Gln501–Gln515. Residues Gln501–Pro550 are disordered.

The protein belongs to the krueppel C2H2-type zinc-finger protein family. As to quaternary structure, interacts with BCAR1.

The protein localises to the nucleus. Its function is as follows. Transcription factor that binds the consensus DNA sequence [GC]AAAAA. Seems to bind and regulate the promoters of MMP1, MMP3, MMP7 and COL1A1. The sequence is that of Zinc finger protein 384 (ZNF384) from Homo sapiens (Human).